Consider the following 457-residue polypeptide: Secreted effector kinase SteC (457 aa).

Residue K256 participates in ATP binding.

This sequence belongs to the protein kinase superfamily. In terms of processing, autophosphorylated.

The protein resides in the secreted. It is found in the host cytoplasm. Functionally, effector proteins function to alter host cell physiology and promote bacterial survival in host tissues. This protein is a kinase, which is required for SPI-2 T3SS-dependent F-actin meshwork formation in infected host cells. This is Secreted effector kinase SteC (steC) from Salmonella typhimurium (strain LT2 / SGSC1412 / ATCC 700720).